A 101-amino-acid chain; its full sequence is Urease subunit beta (101 aa).

The protein belongs to the urease beta subunit family. As to quaternary structure, heterotrimer of UreA (gamma), UreB (beta) and UreC (alpha) subunits. Three heterotrimers associate to form the active enzyme.

The protein localises to the cytoplasm. It carries out the reaction urea + 2 H2O + H(+) = hydrogencarbonate + 2 NH4(+). It participates in nitrogen metabolism; urea degradation; CO(2) and NH(3) from urea (urease route): step 1/1. This Pseudomonas paraeruginosa (strain DSM 24068 / PA7) (Pseudomonas aeruginosa (strain PA7)) protein is Urease subunit beta.